Consider the following 295-residue polypeptide: Light-independent protochlorophyllide reductase iron-sulfur ATP-binding protein (295 aa).

Residues 39–44 (GIGKST) and lysine 68 each bind ATP. Mg(2+) is bound at residue serine 43. 2 residues coordinate [4Fe-4S] cluster: cysteine 124 and cysteine 158. ATP is bound at residue 209-210 (NR).

The protein belongs to the NifH/BchL/ChlL family. As to quaternary structure, homodimer. Protochlorophyllide reductase is composed of three subunits; ChlL, ChlN and ChlB. [4Fe-4S] cluster is required as a cofactor.

The catalysed reaction is chlorophyllide a + oxidized 2[4Fe-4S]-[ferredoxin] + 2 ADP + 2 phosphate = protochlorophyllide a + reduced 2[4Fe-4S]-[ferredoxin] + 2 ATP + 2 H2O. The protein operates within porphyrin-containing compound metabolism; chlorophyll biosynthesis (light-independent). Component of the dark-operative protochlorophyllide reductase (DPOR) that uses Mg-ATP and reduced ferredoxin to reduce ring D of protochlorophyllide (Pchlide) to form chlorophyllide a (Chlide). This reaction is light-independent. The L component serves as a unique electron donor to the NB-component of the complex, and binds Mg-ATP. In Prochlorococcus marinus (strain MIT 9301), this protein is Light-independent protochlorophyllide reductase iron-sulfur ATP-binding protein.